We begin with the raw amino-acid sequence, 323 residues long: Small ribosomal subunit protein uS9m (323 aa).

The tract at residues 298 to 323 is disordered; it reads TRDARKVERKKPGKVKARKSPTWVKR. Residues 304–323 show a composition bias toward basic residues; sequence VERKKPGKVKARKSPTWVKR.

Belongs to the universal ribosomal protein uS9 family.

The protein localises to the mitochondrion. This chain is Small ribosomal subunit protein uS9m (MRPS9), found in Debaryomyces hansenii (strain ATCC 36239 / CBS 767 / BCRC 21394 / JCM 1990 / NBRC 0083 / IGC 2968) (Yeast).